The sequence spans 147 residues: Prefoldin subunit alpha (147 aa).

This sequence belongs to the prefoldin alpha subunit family. As to quaternary structure, heterohexamer of two alpha and four beta subunits.

Its subcellular location is the cytoplasm. In terms of biological role, molecular chaperone capable of stabilizing a range of proteins. Seems to fulfill an ATP-independent, HSP70-like function in archaeal de novo protein folding. The chain is Prefoldin subunit alpha from Methanocorpusculum labreanum (strain ATCC 43576 / DSM 4855 / Z).